The chain runs to 267 residues: 4-hydroxy-tetrahydrodipicolinate reductase (267 aa).

NAD(+)-binding positions include 8–13 (GAGGRM) and glutamate 34. Residue arginine 35 participates in NADP(+) binding. NAD(+) is bound by residues 98–100 (GTT) and 122–125 (APNM). Catalysis depends on histidine 155, which acts as the Proton donor/acceptor. Histidine 156 serves as a coordination point for (S)-2,3,4,5-tetrahydrodipicolinate. Residue lysine 159 is the Proton donor of the active site. 165–166 (GT) lines the (S)-2,3,4,5-tetrahydrodipicolinate pocket.

The protein belongs to the DapB family.

The protein resides in the cytoplasm. The enzyme catalyses (S)-2,3,4,5-tetrahydrodipicolinate + NAD(+) + H2O = (2S,4S)-4-hydroxy-2,3,4,5-tetrahydrodipicolinate + NADH + H(+). It carries out the reaction (S)-2,3,4,5-tetrahydrodipicolinate + NADP(+) + H2O = (2S,4S)-4-hydroxy-2,3,4,5-tetrahydrodipicolinate + NADPH + H(+). The protein operates within amino-acid biosynthesis; L-lysine biosynthesis via DAP pathway; (S)-tetrahydrodipicolinate from L-aspartate: step 4/4. Its function is as follows. Catalyzes the conversion of 4-hydroxy-tetrahydrodipicolinate (HTPA) to tetrahydrodipicolinate. The protein is 4-hydroxy-tetrahydrodipicolinate reductase of Thioalkalivibrio sulfidiphilus (strain HL-EbGR7).